The primary structure comprises 744 residues: Polyribonucleotide nucleotidyltransferase (744 aa).

Residues aspartate 515 and aspartate 521 each contribute to the Mg(2+) site. A KH domain is found at 581–640; the sequence is PRVITVQVPVDKIGEVIGPKGKMINQIQDDTGADISIEDDGTVFIGATDGPSAEAARQAI. An S1 motif domain is found at 652 to 724; sequence GERFVGTVVK…PRGKLSLHAV (73 aa).

Belongs to the polyribonucleotide nucleotidyltransferase family. Mg(2+) serves as cofactor.

The protein resides in the cytoplasm. It catalyses the reaction RNA(n+1) + phosphate = RNA(n) + a ribonucleoside 5'-diphosphate. Involved in mRNA degradation. Catalyzes the phosphorolysis of single-stranded polyribonucleotides processively in the 3'- to 5'-direction. This chain is Polyribonucleotide nucleotidyltransferase, found in Beutenbergia cavernae (strain ATCC BAA-8 / DSM 12333 / CCUG 43141 / JCM 11478 / NBRC 16432 / NCIMB 13614 / HKI 0122).